We begin with the raw amino-acid sequence, 132 residues long: ATP synthase epsilon chain (132 aa).

Belongs to the ATPase epsilon chain family. In terms of assembly, F-type ATPases have 2 components, CF(1) - the catalytic core - and CF(0) - the membrane proton channel. CF(1) has five subunits: alpha(3), beta(3), gamma(1), delta(1), epsilon(1). CF(0) has three main subunits: a, b and c.

The protein resides in the cell inner membrane. In terms of biological role, produces ATP from ADP in the presence of a proton gradient across the membrane. This is ATP synthase epsilon chain from Anaeromyxobacter sp. (strain K).